The following is a 462-amino-acid chain: MTKELLRALPKIDEILGIFNEDFLNENGRETVVSALRDIINENRKAILNEEVDYALTKEEAKSKCEHRLLKKRERNLKRVINGTGVVIHTNLGRSLLSKEATEAVALAASSYSNLEYDLEKGERGSRYSLIEGIIKDITGAEAALVVNNNAAAIMLVLNSLCENKEVIVSRGELVEIGGSFRIPEVMNFSRAKLVEVGTTNRTHLYDYEDAITEETGAFLKVHSSNFKIVGFTKSVSANEICNLAREKDIPVIEDIGSGVLIDLSKYGLEKEPTVIESLEDGVDVVTFSGDKMLGGAQAGIIVGKKKFIDKIKRNQLTRALRVDKFTLAALEITLKHYLNEKEAIEKIPTLHMMTLDLKEIKERANRLYKNLERLNKFYKFSIEEGESTVGGGSMPDSKLSTYLLRIDSDSINEVNLERELREYKIPIITRVYKGAVYIDLRTILEDDYEVIFNALKEIGEK.

N6-(pyridoxal phosphate)lysine is present on Lys292.

It belongs to the SelA family. Pyridoxal 5'-phosphate serves as cofactor.

It is found in the cytoplasm. It catalyses the reaction L-seryl-tRNA(Sec) + selenophosphate + H(+) = L-selenocysteinyl-tRNA(Sec) + phosphate. It functions in the pathway aminoacyl-tRNA biosynthesis; selenocysteinyl-tRNA(Sec) biosynthesis; selenocysteinyl-tRNA(Sec) from L-seryl-tRNA(Sec) (bacterial route): step 1/1. Functionally, converts seryl-tRNA(Sec) to selenocysteinyl-tRNA(Sec) required for selenoprotein biosynthesis. The polypeptide is L-seryl-tRNA(Sec) selenium transferase (Clostridium perfringens (strain ATCC 13124 / DSM 756 / JCM 1290 / NCIMB 6125 / NCTC 8237 / Type A)).